Here is a 60-residue protein sequence, read N- to C-terminus: Large ribosomal subunit protein uL30 (60 aa).

Belongs to the universal ribosomal protein uL30 family. In terms of assembly, part of the 50S ribosomal subunit.

The sequence is that of Large ribosomal subunit protein uL30 from Thermus thermophilus (strain ATCC BAA-163 / DSM 7039 / HB27).